A 476-amino-acid chain; its full sequence is MWTGYKILIFSYLTTEIWMEKQYLSQREVDLEAYFTRNHTVLQGTRFKRAIFQGQYCRNFGCCEDRDDGCVTEFYAANALCYCDKFCDRENSDCCPDYKSFCREEKEWPPHTQPWYPEGCFKDGQHYEEGSVIKENCNSCTCSGQQWKCSQHVCLVRSELIEQVNKGDYGWTAQNYSQFWGMTLEDGFKFRLGTLPPSPMLLSMNEMTASLPATTDLPEFFVASYKWPGWTHGPLDQKNCAASWAFSTASVAADRIAIQSKGRYTANLSPQNLISCCAKNRHGCNSGSIDRAWWYLRKRGLVSHACYPLFKDQNATNNGCAMASRSDGRGKRHATKPCPNNVEKSNRIYQCSPPYRVSSNETEIMKEIMQNGPVQAIMQVREDFFHYKTGIYRHVTSTNKESEKYRKLQTHAVKLTGWGTLRGAQGQKEKFWIAANSWGKSWGENGYFRILRGVNESDIEKLIIAAWGQLTSSDEP.

N38 is a glycosylation site (N-linked (GlcNAc...) asparagine). Residues N59 to E107 enclose the SMB domain. Intrachain disulfides connect C63–C70, C70–C102, C81–C83, C81–C95, C87–C94, and C95–C102. N175, N314, N360, and N455 each carry an N-linked (GlcNAc...) asparagine glycan.

The protein belongs to the peptidase C1 family. In terms of processing, it has been suggested that the active SMB domain may be permitted considerable disulfide bond heterogeneity or variability, thus 2 alternate disulfide patterns based on 3D structures are described with 1 disulfide bond conserved in both. Expressed in the kidney cortex, small intestine and cornea.

It localises to the secreted. It is found in the extracellular space. The protein resides in the extracellular matrix. Its subcellular location is the basement membrane. Its function is as follows. Mediates adhesion of proximal tubule epithelial cells via integrins alpha3-beta1 and alphaV-beta3. This is a non catalytic peptidase C1 family protein. The protein is Tubulointerstitial nephritis antigen (TINAG) of Homo sapiens (Human).